Here is a 102-residue protein sequence, read N- to C-terminus: ATP-dependent Clp protease adapter protein ClpS (102 aa).

It belongs to the ClpS family. In terms of assembly, binds to the N-terminal domain of the chaperone ClpA.

Involved in the modulation of the specificity of the ClpAP-mediated ATP-dependent protein degradation. The chain is ATP-dependent Clp protease adapter protein ClpS from Dechloromonas aromatica (strain RCB).